A 3712-amino-acid polypeptide reads, in one-letter code: Laminin subunit alpha (3712 aa).

A signal peptide spans Met-1–Ala-22. The region spanning Glu-23–Arg-272 is the Laminin N-terminal domain. 2 N-linked (GlcNAc...) asparagine glycosylation sites follow: Asn-116 and Asn-219. Intrachain disulfides connect Cys-273/Cys-282, Cys-275/Cys-296, Cys-298/Cys-307, Cys-310/Cys-330, Cys-333/Cys-342, Cys-335/Cys-367, Cys-370/Cys-379, Cys-382/Cys-400, Cys-403/Cys-414, Cys-405/Cys-421, Cys-423/Cys-432, Cys-435/Cys-445, Cys-448/Cys-460, Cys-450/Cys-468, Cys-470/Cys-479, Cys-482/Cys-492, Cys-495/Cys-507, Cys-497/Cys-514, Cys-516/Cys-525, Cys-528/Cys-538, Cys-541/Cys-553, Cys-543/Cys-560, Cys-562/Cys-571, Cys-574/Cys-584, Cys-587/Cys-599, Cys-589/Cys-605, Cys-607/Cys-616, Cys-619/Cys-629, Cys-632/Cys-644, Cys-634/Cys-650, Cys-652/Cys-661, Cys-664/Cys-674, Cys-677/Cys-691, Cys-679/Cys-700, Cys-702/Cys-711, Cys-714/Cys-729, Cys-732/Cys-746, Cys-734/Cys-753, Cys-755/Cys-764, Cys-767/Cys-782, Cys-785/Cys-797, Cys-787/Cys-804, and Cys-806/Cys-815. 10 consecutive Laminin EGF-like domains span residues Cys-273 to Pro-332, Cys-333 to Pro-402, Cys-403 to Glu-447, Cys-448 to Ala-494, Cys-495 to Tyr-540, Cys-541 to Pro-586, Cys-587 to Pro-631, Cys-632 to Asp-676, Cys-677 to Ile-731, and Cys-732 to Asp-784. N-linked (GlcNAc...) asparagine glycosylation occurs at Asn-395. A glycan (N-linked (GlcNAc...) asparagine) is linked at Asn-453. Asn-508 is a glycosylation site (N-linked (GlcNAc...) asparagine). An N-linked (GlcNAc...) asparagine glycan is attached at Asn-588. Asn-722 carries an N-linked (GlcNAc...) asparagine glycan. Positions Cys-785–Cys-815 constitute a Laminin EGF-like 11; truncated domain. A domain IV'' region spans residues Thr-816–Pro-1374. N-linked (GlcNAc...) asparagine glycans are attached at residues Asn-897 and Asn-1352. 16 disulfides stabilise this stretch: Cys-1375-Cys-1387, Cys-1377-Cys-1394, Cys-1396-Cys-1405, Cys-1408-Cys-1418, Cys-1421-Cys-1429, Cys-1423-Cys-1436, Cys-1438-Cys-1447, Cys-1450-Cys-1463, Cys-1466-Cys-1480, Cys-1468-Cys-1487, Cys-1489-Cys-1498, Cys-1501-Cys-1511, Cys-1514-Cys-1526, Cys-1516-Cys-1533, Cys-1535-Cys-1544, and Cys-1547-Cys-1562. Laminin EGF-like domains follow at residues Cys-1375–Pro-1420, Cys-1421–Glu-1465, Cys-1466–Gln-1513, and Cys-1514–Thr-1564. An N-linked (GlcNAc...) asparagine glycan is attached at Asn-1484. The Laminin EGF-like 16; first part domain maps to Cys-1565 to Cys-1574. 2 N-linked (GlcNAc...) asparagine glycosylation sites follow: Asn-1583 and Asn-1617. A Laminin IV type A domain is found at Ser-1585–Arg-1775. A Laminin EGF-like 16; second part domain is found at Cys-1776–Pro-1808. Disulfide bonds link Cys-1778–Cys-1787, Cys-1790–Cys-1806, Cys-1809–Cys-1818, Cys-1811–Cys-1825, Cys-1828–Cys-1837, Cys-1840–Cys-1856, Cys-1859–Cys-1874, Cys-1861–Cys-1885, Cys-1887–Cys-1896, Cys-1899–Cys-1914, Cys-1917–Cys-1931, Cys-1919–Cys-1938, Cys-1941–Cys-1950, Cys-1953–Cys-1967, Cys-1970–Cys-1980, Cys-1972–Cys-1987, Cys-1989–Cys-1998, Cys-2001–Cys-2014, Cys-2017–Cys-2028, Cys-2019–Cys-2035, Cys-2037–Cys-2046, Cys-2049–Cys-2061, Cys-2064–Cys-2076, Cys-2066–Cys-2083, Cys-2085–Cys-2094, and Cys-2097–Cys-2109. 6 consecutive Laminin EGF-like domains span residues Cys-1809–Ile-1858, Cys-1859–Pro-1916, Cys-1917–Ser-1969, Cys-1970–Ala-2016, Cys-2017–Pro-2063, and Cys-2064–Glu-2111. Asn-1847 carries an N-linked (GlcNAc...) asparagine glycan. A glycan (N-linked (GlcNAc...) asparagine) is linked at Asn-1943. An N-linked (GlcNAc...) asparagine glycan is attached at Asn-2024. Residues Cys-2112–Ile-2671 form a domain II and I region. Positions Lys-2178 to Ser-2249 form a coiled coil. 5 N-linked (GlcNAc...) asparagine glycosylation sites follow: Asn-2196, Asn-2215, Asn-2267, Asn-2301, and Asn-2323. A coiled-coil region spans residues Asn-2301–Leu-2321. Positions Asp-2376–Glu-2450 form a coiled coil. N-linked (GlcNAc...) asparagine glycosylation is found at Asn-2482, Asn-2524, Asn-2538, Asn-2569, Asn-2699, Asn-2720, Asn-2890, Asn-2938, and Asn-3010. The stretch at Glu-2541–Asn-2676 forms a coiled coil. 3 Laminin G-like domains span residues Lys-2672 to Val-2868, Val-2876 to Cys-3048, and Val-3055 to Cys-3223. A disulfide bridge connects residues Cys-3022 and Cys-3048. Asn-3070 carries N-linked (GlcNAc...) asparagine glycosylation. Cys-3196 and Cys-3223 are oxidised to a cystine. The interval Asn-3244–Pro-3297 is disordered. Over residues Ser-3265 to Pro-3297 the composition is skewed to low complexity. 2 consecutive Laminin G-like domains span residues Gly-3349–Cys-3528 and Arg-3534–Cys-3709. Asn-3491 is a glycosylation site (N-linked (GlcNAc...) asparagine). Residues Cys-3505 and Cys-3528 are joined by a disulfide bond. The N-linked (GlcNAc...) asparagine glycan is linked to Asn-3612. Residues Cys-3682 and Cys-3709 are joined by a disulfide bond.

As to quaternary structure, laminin is a complex glycoprotein, consisting of three different polypeptide chains (alpha, beta, gamma), which are bound to each other by disulfide bonds into a cross-shaped molecule comprising one long and three short arms with globules at each end. In terms of tissue distribution, newly formed mesoderm and later prominently expressed in hemocytes, which also synthesize collagen IV. Expressed in muscles.

The protein resides in the secreted. Its subcellular location is the extracellular space. The protein localises to the extracellular matrix. It localises to the basement membrane. It is found in the synapse. The protein resides in the cell projection. Its subcellular location is the axon. The protein localises to the cytoplasmic vesicle. It localises to the secretory vesicle. It is found in the synaptic vesicle. Binding to cells via a high affinity receptor, laminin is thought to mediate the attachment, migration and organization of cells into tissues during embryonic development by interacting with other extracellular matrix components. Activates presynaptic signaling involving integrin alpha-PS3/beta-nu and Fak to suppress neuromuscular junction (NMJ) growth during larval development and during low crawling activity, but not during higher-crawling conditions. Mediates, together with integrin alpha-PS3/beta-nu, glutamate receptor-modulated NMJ growth. The sequence is that of Laminin subunit alpha (LanA) from Drosophila melanogaster (Fruit fly).